Here is a 91-residue protein sequence, read N- to C-terminus: Small ribosomal subunit protein uS19 (91 aa).

The protein belongs to the universal ribosomal protein uS19 family.

Protein S19 forms a complex with S13 that binds strongly to the 16S ribosomal RNA. In Laribacter hongkongensis (strain HLHK9), this protein is Small ribosomal subunit protein uS19.